The primary structure comprises 450 residues: Cytidylate cyclase (450 aa).

The region spanning 97-236 (VTMFVDIRKS…LPVDMTAKLQ (140 aa)) is the Guanylate cyclase domain. A ribonucleoside 5'-triphosphate is bound at residue Phe100. Positions 102, 103, and 146 each coordinate Mn(2+). The tract at residues 318 to 450 (PNQFNFECFV…YRNIIGVYIK (133 aa)) is AGS-C domain.

Belongs to the adenylyl cyclase class-4/guanylyl cyclase family. Pyrimidine cyclase subfamily. In terms of assembly, homodimer. It depends on Mn(2+) as a cofactor.

It localises to the cytoplasm. The enzyme catalyses CTP = 3',5'-cyclic CMP + diphosphate. In E.coli strain MG1655 transformed with both genes cCMP appears between 15 and 30 minutes after infection with phage T5 (at protein level). No cCMP accumulates in uninfected cells. Its function is as follows. Pycsar (pyrimidine cyclase system for antiphage resistance) provides immunity against bacteriophage. The pyrimidine cyclase (PycC) synthesizes cyclic nucleotides in response to infection; these serve as specific second messenger signals. The signal activates the adjacent effector, leading to bacterial cell death and abortive phage infection. A clade E Pycsar system. In terms of biological role, the pyrimidine cyclase gene of a two-gene Pycsar system, generates cyclic CMP (cCMP) from CTP in response to bacteriophage infection. Has little to no activity on ATP, GTP or UTP. Expression of this and adjacent effector EcPycTM (AC P0DV25) confers resistance to bacteriophage P1 and T5; expression of this gene alone does not confer resistance. When cells expressing the Pycsar system are infected by phage T5 at low multiplicity of infection (0.2 MOI) the culture survives, at 2.0 MOI bacteria enter growth arrest. The same cells enter growth arrest after exposure to 250 uM cCMP but not cUMP; thus the effector protein responds only to the cNMP produced by its cognate NTP cyclase. Some of the cells treated with cCMP have abnormal membrane protrusions. The chain is Cytidylate cyclase from Escherichia coli.